The following is a 163-amino-acid chain: Transcription elongation factor GreA (163 aa).

Positions 12 to 73 (YEKIQKEFEA…ELSDLLARAQ (62 aa)) form a coiled coil.

Belongs to the GreA/GreB family.

Its function is as follows. Necessary for efficient RNA polymerase transcription elongation past template-encoded arresting sites. The arresting sites in DNA have the property of trapping a certain fraction of elongating RNA polymerases that pass through, resulting in locked ternary complexes. Cleavage of the nascent transcript by cleavage factors such as GreA or GreB allows the resumption of elongation from the new 3'terminus. GreA releases sequences of 2 to 3 nucleotides. The polypeptide is Transcription elongation factor GreA (Nitratiruptor sp. (strain SB155-2)).